The sequence spans 392 residues: Probable inactive serine/threonine-protein kinase DDB_G0280855 (392 aa).

The Protein kinase domain occupies Ile-46–Phe-349. Residues Tyr-52–Met-60 and Lys-75 contribute to the ATP site.

Belongs to the protein kinase superfamily. CMGC Ser/Thr protein kinase family. MAP kinase subfamily.

The protein is Probable inactive serine/threonine-protein kinase DDB_G0280855 of Dictyostelium discoideum (Social amoeba).